We begin with the raw amino-acid sequence, 94 residues long: DNA-directed RNA polymerase subunit omega (94 aa).

It belongs to the RNA polymerase subunit omega family. The RNAP catalytic core consists of 2 alpha, 1 beta, 1 beta' and 1 omega subunit. When a sigma factor is associated with the core the holoenzyme is formed, which can initiate transcription.

It catalyses the reaction RNA(n) + a ribonucleoside 5'-triphosphate = RNA(n+1) + diphosphate. Its function is as follows. Promotes RNA polymerase assembly. Latches the N- and C-terminal regions of the beta' subunit thereby facilitating its interaction with the beta and alpha subunits. The protein is DNA-directed RNA polymerase subunit omega of Bifidobacterium longum (strain DJO10A).